The sequence spans 569 residues: Urease subunit alpha (569 aa).

Ni(2+)-binding residues include H136, H138, and K219. An N6-carboxylysine modification is found at K219. H221 contributes to the substrate binding site. Ni(2+) is bound by residues H248 and H274. The Proton donor role is filled by H322. Ni(2+) is bound at residue D362.

Belongs to the metallo-dependent hydrolases superfamily. Urease alpha subunit family. In terms of assembly, heterotrimer of UreA (gamma), UreB (beta) and UreC (alpha) subunits. Three heterotrimers associate to form the active enzyme. The cofactor is Ni cation. Post-translationally, carboxylation allows a single lysine to coordinate two nickel ions.

It is found in the cytoplasm. It carries out the reaction urea + 2 H2O + H(+) = hydrogencarbonate + 2 NH4(+). Its pathway is nitrogen metabolism; urea degradation; CO(2) and NH(3) from urea (urease route): step 1/1. This Dinoroseobacter shibae (strain DSM 16493 / NCIMB 14021 / DFL 12) protein is Urease subunit alpha.